The primary structure comprises 83 residues: MPNIKSAIKRVRTNETAEARNISQKNDMRSAVKHAKAAIAENADNKQELVRVAVKKVDKTAQANLIHNNKADRIKSQLMSADK.

This sequence belongs to the bacterial ribosomal protein bS20 family.

Binds directly to 16S ribosomal RNA. The protein is Small ribosomal subunit protein bS20 of Staphylococcus carnosus (strain TM300).